Here is a 273-residue protein sequence, read N- to C-terminus: MATYLIGDVHGCYRELRQLLNQVNFDANQDTLWLTGDLVARGPDSLEVLRFVKSLGSALKLVLGNHDLHLLGVFAKISRNKPKDKLNELLNAPDADELINWLRRQPLLQVDEEKKIVMAHAGITPQWDLATAKKCAREVEAILSSDSYPLFINSMYGDMPNNWSPELTGLPRLRFSTNAFTRMRYCFPNGQLDMICKDKPENAPAPLKPWFDLPNQLPNDYSIIFGHWASLEGKGTPENIYALDTGCCWGGVLTCLRWEDKRYFIQPSLTHLP.

The protein belongs to the Ap4A hydrolase family.

It carries out the reaction P(1),P(4)-bis(5'-adenosyl) tetraphosphate + H2O = 2 ADP + 2 H(+). Hydrolyzes diadenosine 5',5'''-P1,P4-tetraphosphate to yield ADP. The sequence is that of Bis(5'-nucleosyl)-tetraphosphatase, symmetrical from Proteus mirabilis (strain HI4320).